Consider the following 512-residue polypeptide: GMP synthase [glutamine-hydrolyzing] (512 aa).

One can recognise a Glutamine amidotransferase type-1 domain in the interval 5–195 (GIVILDFGSQ…IFGIAKAEKN (191 aa)). Cysteine 82 acts as the Nucleophile in catalysis. Residues histidine 169 and glutamate 171 contribute to the active site. The region spanning 196-387 (WSMENYIEST…LGIPDYMVDR (192 aa)) is the GMPS ATP-PPase domain. 223–229 (SGGVDSS) is a binding site for ATP.

In terms of assembly, homodimer.

It catalyses the reaction XMP + L-glutamine + ATP + H2O = GMP + L-glutamate + AMP + diphosphate + 2 H(+). The protein operates within purine metabolism; GMP biosynthesis; GMP from XMP (L-Gln route): step 1/1. In terms of biological role, catalyzes the synthesis of GMP from XMP. This Fusobacterium nucleatum subsp. nucleatum (strain ATCC 25586 / DSM 15643 / BCRC 10681 / CIP 101130 / JCM 8532 / KCTC 2640 / LMG 13131 / VPI 4355) protein is GMP synthase [glutamine-hydrolyzing].